The primary structure comprises 629 residues: Neuronal acetylcholine receptor subunit alpha-4 (629 aa).

The signal sequence occupies residues 1–30; the sequence is MEIGGSGAPPPLLLLPLLLLLGTGLLPASS. Residues 32–249 lie on the Extracellular side of the membrane; the sequence is IETRAHAEER…IIRRLPLFYT (218 aa). Asn-59 carries N-linked (GlcNAc...) asparagine glycosylation. The Ca(2+) site is built by Val-78 and Glu-80. Asn-109 and Asn-176 each carry an N-linked (GlcNAc...) asparagine glycan. Disulfide bonds link Cys-163–Cys-177 and Cys-227–Cys-228. A helical transmembrane segment spans residues 250 to 270; sequence INLIIPCLLISCLTVLVFYLP. The S-palmitoyl cysteine moiety is linked to residue Cys-273. A run of 2 helical transmembrane segments spans residues 279 to 299 and 312 to 332; these read LCIS…EIIP and LLFT…VLNV. The Cytoplasmic segment spans residues 333 to 603; that stretch reads HHRSPRTHTM…KYVAMVIDRI (271 aa). 2 disordered regions span residues 420-459 and 503-529; these read ETQP…NSSG and SLTE…SDQT. A Phosphoserine modification is found at Ser-427. The segment covering 431 to 442 has biased composition (basic and acidic residues); it reads KVPDLKTSEVEK. Over residues 449-459 the composition is skewed to low complexity; the sequence is PGSCHPPNSSG. The segment covering 504–529 has biased composition (polar residues); that stretch reads LTESKPTGSPASLKTRPSQLPVSDQT. Phosphoserine occurs at positions 540 and 543. Residues 604–624 traverse the membrane as a helical segment; that stretch reads FLWMFIIVCLLGTVGLFLPPW.

It belongs to the ligand-gated ion channel (TC 1.A.9) family. Acetylcholine receptor (TC 1.A.9.1) subfamily. Alpha-4/CHRNA4 sub-subfamily. In terms of assembly, neuronal AChR is composed of two different types of subunits: alpha and beta. CHRNA4 forms heteropentameric neuronal acetylcholine receptors with CHRNB2 and CHRNB4, as well as CHRNA5 and CHRNB3 as accesory subunits. Found in two major stoichiometric forms, LS (low agonist sensitivity): (CHRNA4)3:(CHRNB2)2 and HS (high agonist sensitivity): (CHRNA4)2:(CHRNB2)3, the two stoichiometric forms differ in their unitary conductance, calcium permeability, ACh sensitivity and potentiation by divalent cation. Cells produce predominantly an (CHRNA4)3:(CHRNB2)2 nAChR. The (CHRNA4)2:(CHRNB2)3 expression is selectively up-regulated by nicotine and has lower single channel conductance and calcium permeability. In the striatum, also forms CHRNA4:CHRNA6:CHRNB2 complexes. Also found in the stoichiometric form: (CHRNA4:CHRNB2)2:CHRNB3. Interacts with RIC3; which is required for proper folding and assembly. Interacts with LYPD6.

The protein localises to the synaptic cell membrane. The protein resides in the cell membrane. It carries out the reaction K(+)(in) = K(+)(out). The enzyme catalyses Na(+)(in) = Na(+)(out). It catalyses the reaction Ca(2+)(in) = Ca(2+)(out). Activated by a myriad of ligands such as acetylcholine, cytisine, nicotine, choline and epibatidine. Channel potentiation by calcium is stoichiometry-selective, CHRNA4:CHRNB2 nACh receptor is achieved by calcium association with topographically distinct sites framed by anionic residues within the CHRNA4 subunit and between the CHRNA4 and CHRNB2 subunits. nAChR activity is inhibited by the antagonist alpha-conotoxins BuIA, PnIA, GID and MII, small disulfide-constrained peptides from cone snails. In terms of biological role, component of neuronal acetylcholine receptors (nAChRs) that function as pentameric, ligand-gated cation channels with high calcium permeability among other activities. nAChRs are excitatory neurotrasnmitter receptors formed by a collection of nAChR subunits known to mediate synaptic transmission in the nervous system and the neuromuscular junction. Each nAchR subunit confers differential attributes to channel properties, including activation, deactivation and desensitization kinetics, pH sensitivity, cation permeability, and binding to allosteric modulators. CHRNA4 forms heteropentameric neuronal acetylcholine receptors with CHRNB2 and CHRNB4, as well as CHRNA5 and CHRNB3 as accesory subunits. Is the most abundant nAChR subtype expressed in the central nervous system. Found in two major stoichiometric forms,(CHRNA4)3:(CHRNB2)2 and (CHRNA4)2:(CHRNB2)3, the two stoichiometric forms differ in their unitary conductance, calcium permeability, ACh sensitivity and potentiation by divalent cation. Involved in the modulation of calcium-dependent signaling pathways, influences the release of neurotransmitters, including dopamine, glutamate and GABA. This chain is Neuronal acetylcholine receptor subunit alpha-4 (Chrna4), found in Mus musculus (Mouse).